We begin with the raw amino-acid sequence, 452 residues long: uncharacterized protein (452 aa).

The protein resides in the cytoplasm. Its subcellular location is the nucleus. This is an uncharacterized protein from Schizosaccharomyces pombe (strain 972 / ATCC 24843) (Fission yeast).